We begin with the raw amino-acid sequence, 410 residues long: Peptidase T (410 aa).

Residue His-79 participates in Zn(2+) binding. Asp-81 is a catalytic residue. Asp-142 is a Zn(2+) binding site. Glu-176 serves as the catalytic Proton acceptor. Zn(2+)-binding residues include Glu-177, Asp-199, and His-381.

It belongs to the peptidase M20B family. Requires Zn(2+) as cofactor.

The protein resides in the cytoplasm. It catalyses the reaction Release of the N-terminal residue from a tripeptide.. Its function is as follows. Cleaves the N-terminal amino acid of tripeptides. The sequence is that of Peptidase T from Bacillus cereus (strain B4264).